The following is a 291-amino-acid chain: Protease HtpX (291 aa).

A run of 2 helical transmembrane segments spans residues 4 to 24 (IALFLATNLAVMIVFSIVLNI) and 36 to 56 (LSGLLVMAVLFGFGGSLISLM). H143 contributes to the Zn(2+) binding site. The active site involves E144. Residue H147 coordinates Zn(2+). The next 2 membrane-spanning stretches (helical) occupy residues 151–171 (GDMITMTLMQGVVNTFVIFLS) and 199–219 (FIVSTILELAFGFLASFLTMW). Residue E225 participates in Zn(2+) binding.

It belongs to the peptidase M48B family. It depends on Zn(2+) as a cofactor.

Its subcellular location is the cell inner membrane. This is Protease HtpX from Aliivibrio fischeri (strain MJ11) (Vibrio fischeri).